Reading from the N-terminus, the 600-residue chain is Adenine deaminase (600 aa).

Belongs to the metallo-dependent hydrolases superfamily. Adenine deaminase family. The cofactor is Mn(2+).

It carries out the reaction adenine + H2O + H(+) = hypoxanthine + NH4(+). In Roseobacter denitrificans (strain ATCC 33942 / OCh 114) (Erythrobacter sp. (strain OCh 114)), this protein is Adenine deaminase.